The primary structure comprises 612 residues: UvrABC system protein C (612 aa).

Residues 13–92 (AKPGVYIMHD…IKEHRPKYNT (80 aa)) enclose the GIY-YIG domain. One can recognise a UVR domain in the interval 204–239 (KKIMDRLTTQMQEASEKMEYEEAARYRDLLMSVKQV).

It belongs to the UvrC family. As to quaternary structure, interacts with UvrB in an incision complex.

The protein localises to the cytoplasm. Functionally, the UvrABC repair system catalyzes the recognition and processing of DNA lesions. UvrC both incises the 5' and 3' sides of the lesion. The N-terminal half is responsible for the 3' incision and the C-terminal half is responsible for the 5' incision. In Lachnospira eligens (strain ATCC 27750 / DSM 3376 / VPI C15-48 / C15-B4) (Eubacterium eligens), this protein is UvrABC system protein C.